We begin with the raw amino-acid sequence, 295 residues long: Small ribosomal subunit protein uS2 (295 aa).

Ser-2 carries the N-acetylserine modification. Ser-43 is subject to Phosphoserine. N6-acetyllysine is present on Lys-52. Residues 54 to 113 are interaction with PPP1R16B; it reads TWEKLLLAARAIVAIENPADVSVISSRNTGQRAVLKFAAATGATPIAGRFTPGTFTNQIQ. Position 89 is an N6-acetyllysine; alternate (Lys-89). A Glycyl lysine isopeptide (Lys-Gly) (interchain with G-Cter in SUMO2); alternate cross-link involves residue Lys-89. Thr-97 is modified (phosphothreonine). 2 laminin-binding regions span residues 161–180 and 205–229; these read IPCNNKGAHSVGLMWWMLAR and RDPEEIEKEEQAAAEKAVTKEEFQG. [DE]-W-[ST] repeat units follow at residues 230–232, 247–249, 266–268, 275–277, and 293–295; these read EWT, DWS, and EWS. A laminin-binding region spans residues 242-295; it reads QPEVADWSEGVQVPSVPIQQFPTEDWSAQPSTEDWSAAPTAQATEWVGTTTEWS. Residues 266 to 295 are disordered; the sequence is DWSAQPSTEDWSAAPTAQATEWVGTTTEWS.

The protein belongs to the universal ribosomal protein uS2 family. As to quaternary structure, monomer (37LRP) and homodimer (67LR). Component of the small ribosomal subunit. Mature ribosomes consist of a small (40S) and a large (60S) subunit. The 40S subunit contains about 33 different proteins and 1 molecule of RNA (18S). The 60S subunit contains about 49 different proteins and 3 molecules of RNA (28S, 5.8S and 5S). Interacts with RPS21. Interacts with several laminins including at least LAMB1. Interacts with MDK. The mature dimeric form interacts with PPP1R16B (via its fourth ankyrin repeat). Interacts with PPP1CA only in the presence of PPP1R16B. Post-translationally, acylated. Acylation may be a prerequisite for conversion of the monomeric 37 kDa laminin receptor precursor (37LRP) to the mature dimeric 67 kDa laminin receptor (67LR), and may provide a mechanism for membrane association. In terms of processing, cleaved by stromelysin-3 (ST3) at the cell surface. Cleavage by stromelysin-3 may be a mechanism to alter cell-extracellular matrix interactions.

It is found in the cell membrane. The protein localises to the cytoplasm. It localises to the nucleus. Required for the assembly and/or stability of the 40S ribosomal subunit. Required for the processing of the 20S rRNA-precursor to mature 18S rRNA in a late step of the maturation of 40S ribosomal subunits. Also functions as a cell surface receptor for laminin. Plays a role in cell adhesion to the basement membrane and in the consequent activation of signaling transduction pathways. May play a role in cell fate determination and tissue morphogenesis. Also acts as a receptor for several other ligands, including the pathogenic prion protein, viruses, and bacteria. Acts as a PPP1R16B-dependent substrate of PPP1CA. The chain is Small ribosomal subunit protein uS2 from Bos taurus (Bovine).